We begin with the raw amino-acid sequence, 344 residues long: 2,3,4,5-tetrahydropyridine-2,6-dicarboxylate N-succinyltransferase (344 aa).

Glutamate 205 contacts Mg(2+). Glutamate 221 (acyl-anhydride intermediate) is an active-site residue. Residues arginine 223, glycine 238, serine 241, alanine 264, 279 to 280 (EA), glycine 287, lysine 304, and 317 to 320 (RRNS) contribute to the succinyl-CoA site.

This sequence belongs to the type 2 tetrahydrodipicolinate N-succinyltransferase family. In terms of assembly, homotrimer.

It localises to the cytoplasm. The enzyme catalyses (S)-2,3,4,5-tetrahydrodipicolinate + succinyl-CoA + H2O = (S)-2-succinylamino-6-oxoheptanedioate + CoA. Its pathway is amino-acid biosynthesis; L-lysine biosynthesis via DAP pathway; LL-2,6-diaminopimelate from (S)-tetrahydrodipicolinate (succinylase route): step 1/3. Functionally, catalyzes the conversion of the cyclic tetrahydrodipicolinate (THDP) into the acyclic N-succinyl-L-2-amino-6-oxopimelate using succinyl-CoA. In Pseudomonas paraeruginosa (strain DSM 24068 / PA7) (Pseudomonas aeruginosa (strain PA7)), this protein is 2,3,4,5-tetrahydropyridine-2,6-dicarboxylate N-succinyltransferase.